Reading from the N-terminus, the 354-residue chain is 3-dehydroquinate synthase (354 aa).

NAD(+) contacts are provided by residues 100 to 104 (GATGD), 124 to 125 (TT), lysine 136, lysine 145, and 163 to 166 (FLAT). Residues glutamate 178, histidine 242, and histidine 256 each coordinate Zn(2+).

This sequence belongs to the sugar phosphate cyclases superfamily. Dehydroquinate synthase family. It depends on Co(2+) as a cofactor. The cofactor is Zn(2+). Requires NAD(+) as cofactor.

The protein localises to the cytoplasm. It catalyses the reaction 7-phospho-2-dehydro-3-deoxy-D-arabino-heptonate = 3-dehydroquinate + phosphate. The protein operates within metabolic intermediate biosynthesis; chorismate biosynthesis; chorismate from D-erythrose 4-phosphate and phosphoenolpyruvate: step 2/7. Catalyzes the conversion of 3-deoxy-D-arabino-heptulosonate 7-phosphate (DAHP) to dehydroquinate (DHQ). In Staphylococcus haemolyticus (strain JCSC1435), this protein is 3-dehydroquinate synthase.